A 629-amino-acid chain; its full sequence is DNA-directed RNA polymerase subunit beta' (629 aa).

Zn(2+) is bound by residues cysteine 70, cysteine 72, cysteine 85, and cysteine 88. Aspartate 472, aspartate 474, and aspartate 476 together coordinate Mg(2+).

It belongs to the RNA polymerase beta' chain family. RpoC1 subfamily. In terms of assembly, in plastids the minimal PEP RNA polymerase catalytic core is composed of four subunits: alpha, beta, beta', and beta''. When a (nuclear-encoded) sigma factor is associated with the core the holoenzyme is formed, which can initiate transcription. Mg(2+) serves as cofactor. Zn(2+) is required as a cofactor.

It localises to the plastid. The protein localises to the chloroplast. The catalysed reaction is RNA(n) + a ribonucleoside 5'-triphosphate = RNA(n+1) + diphosphate. Its function is as follows. DNA-dependent RNA polymerase catalyzes the transcription of DNA into RNA using the four ribonucleoside triphosphates as substrates. The polypeptide is DNA-directed RNA polymerase subunit beta' (Porphyra purpurea (Red seaweed)).